The primary structure comprises 72 residues: uncharacterized protein (72 aa).

This sequence belongs to the asfivirus I73R family.

It is found in the virion. This is an uncharacterized protein from Ornithodoros (relapsing fever ticks).